Here is a 369-residue protein sequence, read N- to C-terminus: Probable N-acetyltransferase 16 (369 aa).

Residues 1 to 49 (MKLEASCGTATSEVPKPEKKTARDAEPSSETRPQEVEAEPRSGSGPEAE) form a disordered region. Residues 15–26 (PKPEKKTARDAE) show a composition bias toward basic and acidic residues. Residues 53 to 188 (LDFVVATERE…QGILLVRFNA (136 aa)) form the N-acetyltransferase domain.

In terms of biological role, probable N-acetyltransferase. Shows only trace activity toward L-His and no N-acetyltransferase activity toward other amino acids. The physiological substrate of this enzyme is unknown. This chain is Probable N-acetyltransferase 16 (NAT16), found in Homo sapiens (Human).